Consider the following 274-residue polypeptide: 3-methyl-2-oxobutanoate hydroxymethyltransferase (274 aa).

Asp46 and Asp85 together coordinate Mg(2+). Residues 46-47 (DS), Asp85, and Lys114 contribute to the 3-methyl-2-oxobutanoate site. Residue Glu116 coordinates Mg(2+). Glu183 functions as the Proton acceptor in the catalytic mechanism.

It belongs to the PanB family. As to quaternary structure, homodecamer; pentamer of dimers. Mg(2+) is required as a cofactor.

It is found in the cytoplasm. The enzyme catalyses 3-methyl-2-oxobutanoate + (6R)-5,10-methylene-5,6,7,8-tetrahydrofolate + H2O = 2-dehydropantoate + (6S)-5,6,7,8-tetrahydrofolate. It functions in the pathway cofactor biosynthesis; coenzyme A biosynthesis. In terms of biological role, catalyzes the reversible reaction in which hydroxymethyl group from 5,10-methylenetetrahydrofolate is transferred onto alpha-ketoisovalerate to form ketopantoate. The chain is 3-methyl-2-oxobutanoate hydroxymethyltransferase from Aeropyrum pernix (strain ATCC 700893 / DSM 11879 / JCM 9820 / NBRC 100138 / K1).